The chain runs to 674 residues: tRNA 5-methylaminomethyl-2-thiouridine biosynthesis bifunctional protein MnmC (674 aa).

The segment at 1 to 248 (MAASSLPSHN…KREMCFGRYA (248 aa)) is tRNA (mnm(5)s(2)U34)-methyltransferase. The tract at residues 276–674 (IGAGLAGATV…AIRHWRSGKR (399 aa)) is FAD-dependent cmnm(5)s(2)U34 oxidoreductase.

This sequence in the N-terminal section; belongs to the methyltransferase superfamily. tRNA (mnm(5)s(2)U34)-methyltransferase family. It in the C-terminal section; belongs to the DAO family. The cofactor is FAD.

The protein localises to the cytoplasm. It carries out the reaction 5-aminomethyl-2-thiouridine(34) in tRNA + S-adenosyl-L-methionine = 5-methylaminomethyl-2-thiouridine(34) in tRNA + S-adenosyl-L-homocysteine + H(+). Its function is as follows. Catalyzes the last two steps in the biosynthesis of 5-methylaminomethyl-2-thiouridine (mnm(5)s(2)U) at the wobble position (U34) in tRNA. Catalyzes the FAD-dependent demodification of cmnm(5)s(2)U34 to nm(5)s(2)U34, followed by the transfer of a methyl group from S-adenosyl-L-methionine to nm(5)s(2)U34, to form mnm(5)s(2)U34. This chain is tRNA 5-methylaminomethyl-2-thiouridine biosynthesis bifunctional protein MnmC, found in Hydrogenovibrio crunogenus (strain DSM 25203 / XCL-2) (Thiomicrospira crunogena).